A 340-amino-acid chain; its full sequence is Outer membrane protein U (340 aa).

Positions 1–21 (MKKTLIALSVSAAAVATGVNA) are cleaved as a signal peptide.

This sequence belongs to the Gram-negative porin family. Homotrimer.

The protein resides in the cell outer membrane. Its function is as follows. Forms pores that allow passive diffusion of small molecules across the outer membrane. The protein is Outer membrane protein U (ompU) of Vibrio vulnificus (strain CMCP6).